A 325-amino-acid chain; its full sequence is L-lactate dehydrogenase (325 aa).

Residues Val19, Asp40, Lys45, Tyr70, and 84 to 85 contribute to the NAD(+) site; that span reads GA. Gln87 and Arg93 together coordinate substrate. Residues Thr106, 123 to 125, and Ser148 each bind NAD(+); that span reads AAN. 125–128 serves as a coordination point for substrate; the sequence is NPVD. 153–156 contributes to the substrate binding site; sequence DSAR. Arg158 and His173 together coordinate beta-D-fructose 1,6-bisphosphate. The active-site Proton acceptor is His180. Tyr225 is modified (phosphotyrosine). Position 234 (Thr234) interacts with substrate.

This sequence belongs to the LDH/MDH superfamily. LDH family. As to quaternary structure, homotetramer.

It localises to the cytoplasm. The catalysed reaction is (S)-lactate + NAD(+) = pyruvate + NADH + H(+). It functions in the pathway fermentation; pyruvate fermentation to lactate; (S)-lactate from pyruvate: step 1/1. Allosterically activated by fructose 1,6-bisphosphate (FBP). Catalyzes the conversion of lactate to pyruvate. The chain is L-lactate dehydrogenase from Latilactobacillus sakei subsp. sakei (strain 23K) (Lactobacillus sakei subsp. sakei).